The following is a 522-amino-acid chain: Serine/threonine protein phosphatase 2A 59 kDa regulatory subunit B' gamma isoform (522 aa).

A disordered region spans residues 1-74; the sequence is MIKQIFGKLP…SSTSSNRTNQ (74 aa). Residues 35-58 are compositionally biased toward low complexity; the sequence is PNSGISSISKPSSKSSASNSNGAN. Residues 63-74 are compositionally biased toward polar residues; it reads APSSTSSNRTNQ.

This sequence belongs to the phosphatase 2A regulatory subunit B56 family. PP2A consists of a common heteromeric enzyme, composed of a catalytic subunit (subunits C), a constant regulatory subunit (subunit A), and a variety of regulatory subunits such as subunits B (the R2/B/PR55/B55, R3/B''/PR72/PR130/PR59 and R5/B'/B56 families). Interacts with BRI1. Interacts with IGMT1 and IGMT4. Interacts with ACO3 in the cytosol. In terms of tissue distribution, expressed ubiquitously at low levels. Expressed in roots, emerging lateral roots, cotyledons, leaves, floral stalks and flowers.

The protein localises to the cytoplasm. It is found in the cytosol. Its subcellular location is the nucleus. Its function is as follows. The B regulatory subunit may modulate substrate selectivity and catalytic activity, and may also direct the localization of the catalytic enzyme to a particular subcellular compartment. Required for the formation of the PP2A holoenzyme that negatively regulates brassinosteroid signaling by dephosphorylating and inactivating BRI1 in the cytoplasm. Seems to be functionally connected with CPR5 and may mediate the negative regulation of defense reactions and senescence under low irradiances. May contribute to the epigenetic regulation of defense gene expression. Involved in the control of methoxylation of indole glucosinolates and formation of 4-methoxy- indol-3-yl-methyl glucosinolate in leaves, through direct interaction with indole glucosinolate methyltransferases. Involved in growth regulation and stress signaling. Involved in the regulation of reactive oxygen species (ROS) signaling and maintenance of cellular ROS homeostasis. Required to control the level of ACO3 phosphorylation in the cytoplasm. Regulates hydrogen peroxide metabolism by controlling the abundance of AOX1A and AXO3/AOX1D in leaf mitochondria. May mediate dephosphorylation of CRT1 and promote the degradation of unfolded proteins in endoplasmic reticulum (ER). Involved in the regulation of flowering time by repressing FLC, the main flowering repressor gene. The protein is Serine/threonine protein phosphatase 2A 59 kDa regulatory subunit B' gamma isoform (B'GAMMA) of Arabidopsis thaliana (Mouse-ear cress).